Here is an 868-residue protein sequence, read N- to C-terminus: Thiol protease/hemagglutinin PrtT (868 aa).

Residues 1–27 form the signal peptide; the sequence is MKRIFYTLGLLLLCLPMLQAGPVTRSK. Residues cysteine 184 and histidine 327 contribute to the active site.

The protein belongs to the peptidase C10 family.

Its function is as follows. Appears to be specific for arginine-containing peptide bonds. Possesses hemagglutinin activity. The polypeptide is Thiol protease/hemagglutinin PrtT (prtT) (Porphyromonas gingivalis (Bacteroides gingivalis)).